The primary structure comprises 274 residues: Large ribosomal subunit protein uL2cz/uL2cy (274 aa).

Disordered stretches follow at residues 1 to 25 (MAIH…VKSN) and 224 to 274 (NPVD…RRSK).

It belongs to the universal ribosomal protein uL2 family. As to quaternary structure, part of the 50S ribosomal subunit.

It is found in the plastid. It localises to the chloroplast. This chain is Large ribosomal subunit protein uL2cz/uL2cy (rpl2-A), found in Cucumis sativus (Cucumber).